Reading from the N-terminus, the 327-residue chain is Xylosidase/arabinosidase 43A (327 aa).

Asp12 functions as the Proton acceptor in the catalytic mechanism. The active-site Proton donor is the Glu228.

The protein belongs to the glycosyl hydrolase 43 family.

The protein localises to the secreted. The catalysed reaction is Hydrolysis of (1-&gt;4)-beta-D-xylans, to remove successive D-xylose residues from the non-reducing termini.. It carries out the reaction Hydrolysis of terminal non-reducing alpha-L-arabinofuranoside residues in alpha-L-arabinosides.. With respect to regulation, activity is inhibited by Ag(+), Li(+), Pb(2+), Cu(2+), Cr(3+), Co(3+), Fe(3+), Ni(2+), Mg(2+), Zn(2+), EDTA and SDS; but not by Mn(2+), Ca(2+) and beta-mercaptoethanol. Functionally, bifunctional beta-xylosidase/alpha-L-arabinosidases with a low level of xylanase activity. Is most active on 4-nitrophenyl beta-D-xylopyranoside (pNPX) (defined as 100%), moderate on p-nitrophenyl-alpha-L-arabinofuranoside (pNPA) (23.7%), and weak on beechwood xylan (15.9%) and birchwood xylan (15.2%). Is able to attack xylooligosacchardies with degrees of polymerisation of 2-5, releasing the amounts of reducing sugars in the order of xylopentose &gt; xylotetraose &gt; xylotriose &gt; xylobiose, i.e. the rate of xylose released from xylooligosacchardies increased with the chain length. No activity is detected in the presence of carboxymethyl cellulose-sodium (CMC-Na), sugar beet arabinan, AZCL-arabinan (debranched), 4-nitrophenyl a-D - galactopyranoside, 2-nitrophenyl beta-D-galactopyranoside, and 4-nitrophenyl alpha-D-glucopyranoside. The protein is Xylosidase/arabinosidase 43A of Humicola insolens (Soft-rot fungus).